Reading from the N-terminus, the 628-residue chain is Probable potassium transport system protein Kup (628 aa).

The next 11 membrane-spanning stretches (helical) occupy residues 56-76, 109-129, 141-161, 174-194, 209-229, 253-273, 295-315, 343-363, 372-392, 400-420, and 425-445; these read ILSL…VLLI, LILG…TPAI, AAPG…TLLF, FFGP…VVHI, ALAF…AVVL, WFSL…AMLL, LIVL…TAAF, IYVP…VVTF, AYGI…FFVI, WALC…FFAA, and ILDG…LMMT.

This sequence belongs to the HAK/KUP transporter (TC 2.A.72) family.

Its subcellular location is the cell inner membrane. The catalysed reaction is K(+)(in) + H(+)(in) = K(+)(out) + H(+)(out). Its function is as follows. Transport of potassium into the cell. Likely operates as a K(+):H(+) symporter. The chain is Probable potassium transport system protein Kup from Methylibium petroleiphilum (strain ATCC BAA-1232 / LMG 22953 / PM1).